The following is a 258-amino-acid chain: 2S seed storage albumin protein (258 aa).

The signal sequence occupies residues 1–24; that stretch reads MAKLIPTIALVSVLLFIIANASFA. The propeptide occupies 25 to 35; that stretch reads YRTTITTIEID. Intrachain disulfides connect Cys49–Cys108, Cys61–Cys97, Cys98–Cys145, and Cys110–Cys149. A disordered region spans residues 64 to 87; sequence YLRQSSSRRSPGEEVLRMPGDENQ. Position 69 is a phosphoserine (Ser69). Positions 73 to 83 are enriched in basic and acidic residues; the sequence is SPGEEVLRMPG. A propeptide spanning residues 77 to 86 is cleaved from the precursor; it reads EVLRMPGDEN. A Pyrrolidone carboxylic acid modification is found at Gln87. 2 consecutive propeptides follow at residues 154–156 and 191–193; these read RTN and SDN. Disulfide bonds link Cys162-Cys212, Cys175-Cys201, Cys202-Cys249, and Cys214-Cys256. Gln194 is subject to Pyrrolidone carboxylic acid.

The protein belongs to the 2S seed storage albumins family. In terms of assembly, the 2 mature proteins consist of heterodimers of a small and a large chain; disulfide-linked. Post-translationally, the N-terminus of both large chains is blocked. The C-terminus of the allergen Ric c 1 and allergen Ric c 3 small chains are heterogeneous and the length of the chains can vary from 33 to 36 amino acids and from 36 to 40 amino acids respectively.

2S seed storage proteins. In Ricinus communis (Castor bean), this protein is 2S seed storage albumin protein.